The primary structure comprises 547 residues: MADADVIVVGAGLAGLVAACELVERGHSVIIVDQENAANIGGQAFWSFGGLFFVNSPEQRRLGIRDSQELALQDWLGTAGFDRPEDHWPREWAHAYVDFAAGEKRSWLRARGLQTFPLVGWAERGGYDALGHGNSVPRFHITWGTGPALVEIFARRIRDSVRVRFAHRHRVDELIVNAGLVAGVRGSILEPSNAPRGVASSRKVVGDFEFRASAVIVASGGIGGNLELVRKNWPARLGRVPDQLISGVPAHVDGRMIGIAESAGAHVINNDRMWHYTEGITNYDPVWPNHGIRILPGPSSLWLDANGDRLPVPLYPGYDTLGTLEHICRSGQDYTWFILNARIIAKEFALSGQEQNPDLTSRNVRDLLSRVKPGAPAPVQAFVDHGVDFVSATSLRDLVAGMNDLPDVVPLDYAKVAAEVTARDREVANRFTKDGQITAIRAARNYLGDRFTRVVAPHRLTDPKAGPLIAVKLHILTRKTLGGLETDLDSRVLKEDGTTFGGLYAAGEAAGFGGGGVHGYRSLEGTFLGGCIFSGRAAGRGAAADIA.

Residue 5 to 36 (DVIVVGAGLAGLVAACELVERGHSVIIVDQEN) coordinates FAD.

This sequence belongs to the FAD-dependent oxidoreductase 2 family. FAD serves as cofactor.

It participates in lipid metabolism; steroid biosynthesis. Able to catalyze the elimination of the C-1 and C-2 hydrogen atoms of the A-ring from the polycyclic ring structure of 3-ketosteroids, but the ketosteroid dehydrogenase activity is low compared to KsdD in the cholesterol degradation process. The low activity could be due to different substrate specificity. The polypeptide is KsdD-like steroid dehydrogenase MSMEG_5835 (Mycolicibacterium smegmatis (strain ATCC 700084 / mc(2)155) (Mycobacterium smegmatis)).